The chain runs to 303 residues: Succinate--CoA ligase [ADP-forming] subunit alpha (303 aa).

Residues 20 to 23 (TGSE), K46, and 108 to 110 (ITE) contribute to the CoA site. Y173 provides a ligand contact to substrate. The active-site Tele-phosphohistidine intermediate is H259.

This sequence belongs to the succinate/malate CoA ligase alpha subunit family. As to quaternary structure, heterotetramer of two alpha and two beta subunits.

It catalyses the reaction succinate + ATP + CoA = succinyl-CoA + ADP + phosphate. The enzyme catalyses GTP + succinate + CoA = succinyl-CoA + GDP + phosphate. It functions in the pathway carbohydrate metabolism; tricarboxylic acid cycle; succinate from succinyl-CoA (ligase route): step 1/1. Succinyl-CoA synthetase functions in the citric acid cycle (TCA), coupling the hydrolysis of succinyl-CoA to the synthesis of either ATP or GTP and thus represents the only step of substrate-level phosphorylation in the TCA. The alpha subunit of the enzyme binds the substrates coenzyme A and phosphate, while succinate binding and nucleotide specificity is provided by the beta subunit. This is Succinate--CoA ligase [ADP-forming] subunit alpha from Mycobacterium bovis (strain ATCC BAA-935 / AF2122/97).